Here is a 266-residue protein sequence, read N- to C-terminus: Glucosamine-6-phosphate deaminase (266 aa).

The Proton acceptor; for enolization step role is filled by D72. D141 (for ring-opening step) is an active-site residue. The active-site Proton acceptor; for ring-opening step is the H143. E148 functions as the For ring-opening step in the catalytic mechanism.

This sequence belongs to the glucosamine/galactosamine-6-phosphate isomerase family. NagB subfamily. Homohexamer.

It carries out the reaction alpha-D-glucosamine 6-phosphate + H2O = beta-D-fructose 6-phosphate + NH4(+). The protein operates within amino-sugar metabolism; N-acetylneuraminate degradation; D-fructose 6-phosphate from N-acetylneuraminate: step 5/5. Its activity is regulated as follows. Allosterically activated by N-acetylglucosamine 6-phosphate (GlcNAc6P). Its function is as follows. Catalyzes the reversible isomerization-deamination of glucosamine 6-phosphate (GlcN6P) to form fructose 6-phosphate (Fru6P) and ammonium ion. This Salmonella typhimurium (strain LT2 / SGSC1412 / ATCC 700720) protein is Glucosamine-6-phosphate deaminase.